The sequence spans 121 residues: Ribonuclease CL2 (121 aa).

2 residues coordinate substrate: Lys-6 and Arg-9. The Proton acceptor role is filled by His-11. 3 disulfide bridges follow: Cys-26–Cys-81, Cys-42–Cys-92, and Cys-60–Cys-107. Substrate is bound by residues 43–47 (KPSNT) and Arg-82. Catalysis depends on His-114, which acts as the Proton donor.

The protein belongs to the pancreatic ribonuclease family.

It localises to the secreted. In terms of biological role, pyrimidine-specific nuclease with preference for C. The sequence is that of Ribonuclease CL2 from Gallus gallus (Chicken).